The chain runs to 308 residues: Isoaspartyl peptidase/L-asparaginase (308 aa).

Residue M1 is modified to N-acetylmethionine. T168 (nucleophile) is an active-site residue. Substrate is bound by residues 196 to 199 and 219 to 222; these read RVGD and TGHG.

It belongs to the Ntn-hydrolase family. Heterodimer of an alpha and beta chain produced by autocleavage. This heterodimer may then dimerize in turn, giving rise to a heterotetramer. Cleaved into an alpha and beta chain by autocatalysis; this activates the enzyme. The N-terminal residue of the beta subunit is responsible for the nucleophile hydrolase activity. Expressed in brain, kidney, testis and tissues of the gastrointestinal tract. Present in sperm (at protein level). Over-expressed in uterine, mammary, prostatic and ovarian carcinoma.

The protein localises to the cytoplasm. It catalyses the reaction L-asparagine + H2O = L-aspartate + NH4(+). The enzyme catalyses Cleavage of a beta-linked Asp residue from the N-terminus of a polypeptide.. With respect to regulation, glycine accelerates autocleavage into an alpha and beta chain. In terms of biological role, has both L-asparaginase and beta-aspartyl peptidase activity. May be involved in the production of L-aspartate, which can act as an excitatory neurotransmitter in some brain regions. Is highly active with L-Asp beta-methyl ester. Besides, has catalytic activity toward beta-aspartyl dipeptides and their methyl esters, including beta-L-Asp-L-Phe, beta-L-Asp-L-Phe methyl ester (aspartame), beta-L-Asp-L-Ala, beta-L-Asp-L-Leu and beta-L-Asp-L-Lys. Does not have aspartylglucosaminidase activity and is inactive toward GlcNAc-L-Asn. Likewise, has no activity toward glutamine. This Homo sapiens (Human) protein is Isoaspartyl peptidase/L-asparaginase (ASRGL1).